The following is a 359-amino-acid chain: Peptide chain release factor 1 (359 aa).

Position 236 is an N5-methylglutamine (Gln236).

It belongs to the prokaryotic/mitochondrial release factor family. In terms of processing, methylated by PrmC. Methylation increases the termination efficiency of RF1.

It is found in the cytoplasm. Peptide chain release factor 1 directs the termination of translation in response to the peptide chain termination codons UAG and UAA. The protein is Peptide chain release factor 1 (prfA) of Mycoplasma pneumoniae (strain ATCC 29342 / M129 / Subtype 1) (Mycoplasmoides pneumoniae).